Reading from the N-terminus, the 238-residue chain is ATP synthase subunit a (238 aa).

5 helical membrane passes run 17–37 (LSDMLMITITCLIVFIIAVAA), 75–95 (FLTLGVTLIMYVFVANMLGLP), 112–132 (DATVTLTLAVMVVALTHYYGV), 179–199 (ILLGLLASLGTHYGVLGAVGA), and 202–222 (FPIMVWQAFSIFVGTIQAFIF).

It belongs to the ATPase A chain family. In terms of assembly, F-type ATPases have 2 components, CF(1) - the catalytic core - and CF(0) - the membrane proton channel. CF(1) has five subunits: alpha(3), beta(3), gamma(1), delta(1), epsilon(1). CF(0) has three main subunits: a(1), b(2) and c(9-12). The alpha and beta chains form an alternating ring which encloses part of the gamma chain. CF(1) is attached to CF(0) by a central stalk formed by the gamma and epsilon chains, while a peripheral stalk is formed by the delta and b chains.

It is found in the cell membrane. Key component of the proton channel; it plays a direct role in the translocation of protons across the membrane. This is ATP synthase subunit a from Bacillus sp. (strain PS3).